The following is a 300-amino-acid chain: MNQESSFRAPPKRRVRGSNPNISNPHQLFDDTSGGPVPHGGDFPNHSSPALGIPAQAFLSEPMSNFAMAYGSSLASQGKEMMDKNIDRIIPVSKIKYYFAVDTVYVGKKIGLLMFPYMHQDWEVRYQQDTPVAPRFDINAPDLYIPVMAFITYILVAGLALGTQSRFSPEILGMQASSALAWLIVEVLAILLSLYLVTVNTDLTTVDLVAFSGYKYVGMISGVIAGLLFGNTGYYVVLAWCCISIVFFMIRTLRLKILSEAAAEGVLVRGARNQLRMYLTMAIAAVQPIFMYWLTYHLVR.

Residues 1 to 46 are disordered; that stretch reads MNQESSFRAPPKRRVRGSNPNISNPHQLFDDTSGGPVPHGGDFPNH. The Cytoplasmic portion of the chain corresponds to 1-142; the sequence is MNQESSFRAP…APRFDINAPD (142 aa). A helical transmembrane segment spans residues 143-163; it reads LYIPVMAFITYILVAGLALGT. Topologically, residues 164–178 are extracellular; it reads QSRFSPEILGMQASS. A helical transmembrane segment spans residues 179-199; sequence ALAWLIVEVLAILLSLYLVTV. The Cytoplasmic portion of the chain corresponds to 200–205; it reads NTDLTT. A helical transmembrane segment spans residues 206-226; that stretch reads VDLVAFSGYKYVGMISGVIAG. Leu227 is a topological domain (extracellular). Residues 228–248 traverse the membrane as a helical segment; the sequence is LFGNTGYYVVLAWCCISIVFF. The Cytoplasmic portion of the chain corresponds to 249–278; it reads MIRTLRLKILSEAAAEGVLVRGARNQLRMY. A helical transmembrane segment spans residues 279–299; sequence LTMAIAAVQPIFMYWLTYHLV. Position 300 (Arg300) is a topological domain, extracellular.

This sequence belongs to the YIF1 family.

The protein resides in the endoplasmic reticulum membrane. It localises to the golgi apparatus membrane. The protein localises to the endoplasmic reticulum-Golgi intermediate compartment membrane. In terms of biological role, functions in endoplasmic reticulum to Golgi vesicle-mediated transport and regulates the proper organization of the endoplasmic reticulum and the Golgi. Plays a key role in targeting to neuronal dendrites receptors such as HTR1A. Plays also a role in primary cilium and sperm flagellum assembly probably through protein transport to these compartments. The chain is Protein YIF1B-B (yif1b-b) from Xenopus laevis (African clawed frog).